A 469-amino-acid polypeptide reads, in one-letter code: 3-isopropylmalate dehydratase large subunit (469 aa).

Residues C347, C410, and C413 each contribute to the [4Fe-4S] cluster site.

The protein belongs to the aconitase/IPM isomerase family. LeuC type 1 subfamily. Heterodimer of LeuC and LeuD. The cofactor is [4Fe-4S] cluster.

The catalysed reaction is (2R,3S)-3-isopropylmalate = (2S)-2-isopropylmalate. The protein operates within amino-acid biosynthesis; L-leucine biosynthesis; L-leucine from 3-methyl-2-oxobutanoate: step 2/4. Its function is as follows. Catalyzes the isomerization between 2-isopropylmalate and 3-isopropylmalate, via the formation of 2-isopropylmaleate. This is 3-isopropylmalate dehydratase large subunit from Cupriavidus pinatubonensis (strain JMP 134 / LMG 1197) (Cupriavidus necator (strain JMP 134)).